A 187-amino-acid chain; its full sequence is Corticoliberin (187 aa).

The signal sequence occupies residues 1-24; it reads MRLRLLVSAGMLLVALSPCLPCRA. Residues 25–144 constitute a propeptide that is removed on maturation; sequence LLSRGSVSGA…HQGALERERR (120 aa). Residues 75-95 form a disordered region; sequence AARLSPNSTPLTAGRGSRPSH. The residue at position 185 (isoleucine 185) is an Isoleucine amide.

This sequence belongs to the sauvagine/corticotropin-releasing factor/urotensin I family. As to quaternary structure, interacts (via C-terminus) with CRFR1 (via N-terminal extracellular domain). As to expression, produced by the hypothalamus.

Its subcellular location is the secreted. In terms of biological role, hormone regulating the release of corticotropin from pituitary gland. Induces NLRP6 in intestinal epithelial cells, hence may influence gut microbiota profile. The protein is Corticoliberin (Crh) of Rattus norvegicus (Rat).